The primary structure comprises 72 residues: SRY-related protein AES6 (72 aa).

Residues 1-69 (VKRPMNAFMV…KHMADYPDYK (69 aa)) constitute a DNA-binding region (HMG box).

Its subcellular location is the nucleus. This is SRY-related protein AES6 from Alligator mississippiensis (American alligator).